Here is a 489-residue protein sequence, read N- to C-terminus: Mitochondrial-processing peptidase subunit beta (489 aa).

A mitochondrion-targeting transit peptide spans 1–45 (MAAAAARVVLLPAARRRLWGFSESLLIRGAAGRSSYFGENRLRST). Histidine 101 serves as a coordination point for Zn(2+). Glutamate 104 (proton acceptor) is an active-site residue. Positions 105 and 181 each coordinate Zn(2+).

It belongs to the peptidase M16 family. In terms of assembly, heterodimer of PMPCA (alpha) and PMPCB (beta) subunits, forming the mitochondrial processing protease (MPP) in which PMPCA is involved in substrate recognition and binding and PMPCB is the catalytic subunit. Requires Zn(2+) as cofactor.

The protein resides in the mitochondrion matrix. It carries out the reaction Release of N-terminal transit peptides from precursor proteins imported into the mitochondrion, typically with Arg in position P2.. With respect to regulation, binding to PMPCA is required for catalytic activity. Its function is as follows. Catalytic subunit of the essential mitochondrial processing protease (MPP), which cleaves the mitochondrial sequence off newly imported precursors proteins. Preferentially, cleaves after an arginine at position P2. Required for PINK1 turnover by coupling PINK1 mitochondrial import and cleavage, which results in subsequent PINK1 proteolysis. This chain is Mitochondrial-processing peptidase subunit beta (PMPCB), found in Pongo abelii (Sumatran orangutan).